The primary structure comprises 211 residues: Thiamine-phosphate synthase (211 aa).

4-amino-2-methyl-5-(diphosphooxymethyl)pyrimidine-binding positions include 39–43 and N71; that span reads QLREK. Mg(2+) is bound by residues D72 and D91. A 4-amino-2-methyl-5-(diphosphooxymethyl)pyrimidine-binding site is contributed by S110. Residue 136–138 coordinates 2-[(2R,5Z)-2-carboxy-4-methylthiazol-5(2H)-ylidene]ethyl phosphate; sequence TAT. K139 contacts 4-amino-2-methyl-5-(diphosphooxymethyl)pyrimidine. 2-[(2R,5Z)-2-carboxy-4-methylthiazol-5(2H)-ylidene]ethyl phosphate-binding positions include A167 and 187 to 188; that span reads VS.

The protein belongs to the thiamine-phosphate synthase family. Mg(2+) is required as a cofactor.

The enzyme catalyses 2-[(2R,5Z)-2-carboxy-4-methylthiazol-5(2H)-ylidene]ethyl phosphate + 4-amino-2-methyl-5-(diphosphooxymethyl)pyrimidine + 2 H(+) = thiamine phosphate + CO2 + diphosphate. It catalyses the reaction 2-(2-carboxy-4-methylthiazol-5-yl)ethyl phosphate + 4-amino-2-methyl-5-(diphosphooxymethyl)pyrimidine + 2 H(+) = thiamine phosphate + CO2 + diphosphate. The catalysed reaction is 4-methyl-5-(2-phosphooxyethyl)-thiazole + 4-amino-2-methyl-5-(diphosphooxymethyl)pyrimidine + H(+) = thiamine phosphate + diphosphate. Its pathway is cofactor biosynthesis; thiamine diphosphate biosynthesis; thiamine phosphate from 4-amino-2-methyl-5-diphosphomethylpyrimidine and 4-methyl-5-(2-phosphoethyl)-thiazole: step 1/1. Its function is as follows. Condenses 4-methyl-5-(beta-hydroxyethyl)thiazole monophosphate (THZ-P) and 2-methyl-4-amino-5-hydroxymethyl pyrimidine pyrophosphate (HMP-PP) to form thiamine monophosphate (TMP). The polypeptide is Thiamine-phosphate synthase (Solidesulfovibrio magneticus (strain ATCC 700980 / DSM 13731 / RS-1) (Desulfovibrio magneticus)).